Consider the following 376-residue polypeptide: Alanine racemase 1 (376 aa).

The active-site Proton acceptor; specific for D-alanine is the lysine 40. N6-(pyridoxal phosphate)lysine is present on lysine 40. Residue arginine 138 coordinates substrate. The Proton acceptor; specific for L-alanine role is filled by tyrosine 268. Methionine 316 provides a ligand contact to substrate.

Belongs to the alanine racemase family. Pyridoxal 5'-phosphate is required as a cofactor.

The enzyme catalyses L-alanine = D-alanine. It functions in the pathway amino-acid biosynthesis; D-alanine biosynthesis; D-alanine from L-alanine: step 1/1. Functionally, catalyzes the interconversion of L-alanine and D-alanine. May also act on other amino acids. This Oceanobacillus iheyensis (strain DSM 14371 / CIP 107618 / JCM 11309 / KCTC 3954 / HTE831) protein is Alanine racemase 1 (alr1).